A 107-amino-acid polypeptide reads, in one-letter code: MKNLGNMMKQAQQMQARMQEMQSKLAEVEVNGVSAGGMVSILLNGKGELKQIKLDKSVVDPEDVEVLEDLIVAAFNDAKNKVEAHMAEETAKLMGGLKLPPGFKLPF.

It belongs to the YbaB/EbfC family. Homodimer.

It is found in the cytoplasm. It localises to the nucleoid. Functionally, binds to DNA and alters its conformation. May be involved in regulation of gene expression, nucleoid organization and DNA protection. The protein is Nucleoid-associated protein RC1_2305 of Rhodospirillum centenum (strain ATCC 51521 / SW).